Reading from the N-terminus, the 372-residue chain is MNLSEIGYRRVVVKLGTSVLTSGSLKLDKAHMVELARQMACLMKAGVEVVLCTSGAIAAGKEHLGYPKLPDTIASKQLLAAVGQSQLILAWSQLFSIYGLHVGQLLLTRADLHDRERYLNARDSLNALLNNGIIPIINENDAVATAEIKVGDNDNLSARAALLCDADLLILLTDQKGLFDADPRKNPDAKLITEVQNIDDSLRMLAGGAVSGLGTGGMATKLEAADIARRAGVEVVIASGHYKDVIQNVVCKKPVGTHFTALEHPLESRKQWILAGPKARGQLVIDAGAIGAVTEKGRSLLSKGITEVKGLFQRGDTLELIDTKGKVYAKGMSRYSSADVTKLAGKHSDSIEEVLGYDYGDAVVHRNDMVVL.

Residue Lys-14 coordinates ATP. Ser-54, Asp-141, and Asn-153 together coordinate substrate. ATP contacts are provided by residues 173 to 174 (TD) and 215 to 221 (TGGMATK). One can recognise a PUA domain in the interval 280–358 (RGQLVIDAGA…DSIEEVLGYD (79 aa)).

This sequence belongs to the glutamate 5-kinase family.

Its subcellular location is the cytoplasm. The enzyme catalyses L-glutamate + ATP = L-glutamyl 5-phosphate + ADP. Its pathway is amino-acid biosynthesis; L-proline biosynthesis; L-glutamate 5-semialdehyde from L-glutamate: step 1/2. Its function is as follows. Catalyzes the transfer of a phosphate group to glutamate to form L-glutamate 5-phosphate. This Shewanella pealeana (strain ATCC 700345 / ANG-SQ1) protein is Glutamate 5-kinase.